The chain runs to 36 residues: Insecticidal toxin LaIT1 (36 aa).

2 disulfide bridges follow: cysteine 11/cysteine 23 and cysteine 17/cysteine 29.

In terms of tissue distribution, expressed by the venom gland.

The protein resides in the secreted. Functionally, affects the activity of both ryanodine-sensitive calcium-release channels RyR1 and RyR2 with high potency. At lower concentrations the toxin increases full openings of the RyRs, and at higher concentrations it inhibits full openings and induce openings to subconductance levels and reduces the number of full conductance openings. The different actions may be attributed to the toxins binding at different sites on the RyRs, with binding at a high-affinity site mediating the increase in full openings and the induction of subconductance states evoked upon binding to a lower-affinity site. Shows insect lethality against crickets and common cutworms (only shows paralysis against cockroaches), but no toxicity is observed in mice. This chain is Insecticidal toxin LaIT1, found in Liocheles australasiae (Dwarf wood scorpion).